Consider the following 182-residue polypeptide: Adenine phosphoribosyltransferase (182 aa).

It belongs to the purine/pyrimidine phosphoribosyltransferase family. In terms of assembly, homodimer.

It localises to the cytoplasm. The enzyme catalyses AMP + diphosphate = 5-phospho-alpha-D-ribose 1-diphosphate + adenine. The protein operates within purine metabolism; AMP biosynthesis via salvage pathway; AMP from adenine: step 1/1. Its function is as follows. Catalyzes a salvage reaction resulting in the formation of AMP, that is energically less costly than de novo synthesis. The protein is Adenine phosphoribosyltransferase of Campylobacter jejuni subsp. jejuni serotype O:2 (strain ATCC 700819 / NCTC 11168).